A 505-amino-acid polypeptide reads, in one-letter code: Zealexin A1 synthase (505 aa).

The chain crosses the membrane as a helical span at residues 7–26; that stretch reads IAVGTVAVVAVLSKLKSAVT. Residue cysteine 442 coordinates heme.

Belongs to the cytochrome P450 family. It depends on heme as a cofactor.

Its subcellular location is the membrane. The catalysed reaction is (S)-beta-macrocarpene + 3 reduced [NADPH--hemoprotein reductase] + 3 O2 = zealexin A1 + 3 oxidized [NADPH--hemoprotein reductase] + 4 H2O + 4 H(+). Functionally, involved in production of the antifungal phytoalexin zealexin A1. The enzyme sequentially oxidizes(S)-beta-macrocarpene via alcohol and aldehyde intermediates to form zealexin A1, a maize phytoalexin that provides biochemical protection against fungal infection. The chain is Zealexin A1 synthase from Zea mays (Maize).